The sequence spans 626 residues: Lysine--tRNA ligase, cytoplasmic (626 aa).

M1 is modified (N-acetylmethionine). Polar residues-rich tracts occupy residues 1–11 (MEGAADQTTKA) and 18–27 (DSSTTLNAAE). The disordered stretch occupies residues 1-84 (MEGAADQTTK…QKAVAADDEE (84 aa)). Residues 37–69 (RSKNALKKEQKMKQKEEEKRRKDEEKAEKAKQA) are a coiled coil. Basic and acidic residues predominate over residues 42-67 (LKKEQKMKQKEEEKRRKDEEKAEKAK). Positions 69–78 (APKASSQKAV) are enriched in low complexity. The segment at residues 141-217 (SLAGRIMSKR…RGELSIFPRS (77 aa)) is a DNA-binding region (OB). 2 residues coordinate substrate: G313 and E337. Residues 359–361 (RNE) and 367–368 (HN) each bind ATP. Positions 375 and 377 each coordinate substrate. Residues E521 and E528 each coordinate Ca(2+). 528 to 529 (EL) provides a ligand contact to ATP. Substrate is bound by residues N531 and E535. 584–587 (GIDR) provides a ligand contact to ATP.

The protein belongs to the class-II aminoacyl-tRNA synthetase family. The cofactor is Ca(2+).

It localises to the cytoplasm. The protein localises to the cytosol. The enzyme catalyses tRNA(Lys) + L-lysine + ATP = L-lysyl-tRNA(Lys) + AMP + diphosphate. Its function is as follows. Catalyzes the specific attachment of an amino acid to its cognate tRNA in a 2 step reaction: the amino acid (AA) is first activated by ATP to form AA-AMP and then transferred to the acceptor end of the tRNA. Promotes aminoacylation of non-cognate tRNAs and translational recoding of lysine at nonsense codons. This Arabidopsis thaliana (Mouse-ear cress) protein is Lysine--tRNA ligase, cytoplasmic.